The chain runs to 248 residues: N-acylneuraminate-9-phosphatase (248 aa).

Asp12 provides a ligand contact to Mg(2+). Residues Leu13, Asp14, Thr131, Asn132, and Lys164 each coordinate phosphate. Asp14 provides a ligand contact to Mg(2+). Asp189 lines the Mg(2+) pocket.

Belongs to the HAD-like hydrolase superfamily. NANP family. The cofactor is Mg(2+).

It catalyses the reaction N-acetylneuraminate 9-phosphate + H2O = N-acetylneuraminate + phosphate. It carries out the reaction N-glycoloylneuraminate 9-phosphate + H2O = N-glycoloylneuraminate + phosphate. Its pathway is amino-sugar metabolism; N-acetylneuraminate biosynthesis. Inhibited by calcium. Inhibited by vanadate, sodium orthovanate and phosphonate. Functionally, catalyzes the dephosphorylation of N-acylneuraminate 9-phosphate (Neu5Ac-9-P) to sialic acid N-acetylneuraminic acid (Neu5Ac). May also use N-glycoloylneuraminate 9-phosphate as substrate. The polypeptide is N-acylneuraminate-9-phosphatase (Mus musculus (Mouse)).